Reading from the N-terminus, the 222-residue chain is Probable transaldolase (222 aa).

Catalysis depends on Lys-91, which acts as the Schiff-base intermediate with substrate.

The protein belongs to the transaldolase family. Type 3B subfamily.

Its subcellular location is the cytoplasm. It catalyses the reaction D-sedoheptulose 7-phosphate + D-glyceraldehyde 3-phosphate = D-erythrose 4-phosphate + beta-D-fructose 6-phosphate. It participates in carbohydrate degradation; pentose phosphate pathway; D-glyceraldehyde 3-phosphate and beta-D-fructose 6-phosphate from D-ribose 5-phosphate and D-xylulose 5-phosphate (non-oxidative stage): step 2/3. Transaldolase is important for the balance of metabolites in the pentose-phosphate pathway. The protein is Probable transaldolase of Chlorobium phaeovibrioides (strain DSM 265 / 1930) (Prosthecochloris vibrioformis (strain DSM 265)).